The primary structure comprises 473 residues: M-phase inducer phosphatase 3 (473 aa).

The interval Met-1 to Ser-23 is disordered. Ser-2 carries the post-translational modification N-acetylserine. A phosphoserine mark is found at Ser-20 and Ser-38. Thr-48 carries the post-translational modification Phosphothreonine. Phosphoserine is present on residues Ser-57, Ser-61, and Ser-64. Phosphothreonine is present on Thr-67. At Ser-122 the chain carries Phosphoserine; by CDK1. Ser-129 bears the Phosphoserine mark. Thr-130 bears the Phosphothreonine mark. The segment at Asn-132 to Leu-158 is disordered. The span at Cys-145–Leu-158 shows a compositional bias: polar residues. Ser-168 carries the phosphoserine modification. Phosphoserine; by PLK3 is present on residues Ser-191 and Ser-198. Ser-214 carries the phosphoserine; by CDK1 modification. The residue at position 216 (Ser-216) is a Phosphoserine; by CHEK1, CHEK2, BRSK1, MAPK14 AND MARK3. Residues Leu-321–Glu-428 form the Rhodanese domain. The segment at Tyr-334–Phe-379 is HIV-1 Vpr binding site. Cys-377 is a catalytic residue. Ser-472 carries the post-translational modification Phosphoserine.

The protein belongs to the MPI phosphatase family. Interacts with MAPK14 and 14-3-3 proteins. When phosphorylated on Ser-129 and/or Thr-130, interacts with PLK1. Interacts with MARK3/C-TAK1. As to quaternary structure, (Microbial infection) Interacts with HIV-1 Vpr; this interaction inactivates CDC25C phosphatase activity. In terms of processing, phosphorylated by CHEK1 and MAPK14 at Ser-216. This phosphorylation creates a binding site for 14-3-3 protein and inhibits the phosphatase. Phosphorylated by PLK4. Phosphorylated by PLK1, leading to activate the phosphatase activity. Phosphorylation by PLK3 at Ser-191 promotes nuclear translocation. Ser-198 is a minor phosphorylation site. Was initially reported to be phosphorylated by PLK3 at Ser-216. However, such phosphorylation by PLK3 was not confirmed by other groups. Phosphorylation at Thr-48, Thr-67, Ser-122, Thr-130, Ser-168 and Ser-214 occurs at G2 and G2-M transition and is probably catalyzed by CDK1. Ser-168 phosphorylation levels are lower than those at the other 5 CDK1 sites. Phosphorylation by CDK1 leads to increased activity.

The protein resides in the nucleus. The enzyme catalyses O-phospho-L-tyrosyl-[protein] + H2O = L-tyrosyl-[protein] + phosphate. In terms of biological role, functions as a dosage-dependent inducer in mitotic control. Tyrosine protein phosphatase required for progression of the cell cycle. When phosphorylated, highly effective in activating G2 cells into prophase. Directly dephosphorylates CDK1 and activates its kinase activity. The chain is M-phase inducer phosphatase 3 (CDC25C) from Homo sapiens (Human).